We begin with the raw amino-acid sequence, 153 residues long: Endoribonuclease YbeY (153 aa).

Zn(2+)-binding residues include H113, H117, and H123.

The protein belongs to the endoribonuclease YbeY family. The cofactor is Zn(2+).

It localises to the cytoplasm. Functionally, single strand-specific metallo-endoribonuclease involved in late-stage 70S ribosome quality control and in maturation of the 3' terminus of the 16S rRNA. The protein is Endoribonuclease YbeY of Aliivibrio salmonicida (strain LFI1238) (Vibrio salmonicida (strain LFI1238)).